A 215-amino-acid polypeptide reads, in one-letter code: HTH-type transcriptional repressor FabR (215 aa).

One can recognise an HTH tetR-type domain in the interval 10–70 (KTRRSLVEAA…TMVDESGLML (61 aa)). Positions 33–52 (SLREVAREAGIAPTSFYRHF) form a DNA-binding region, H-T-H motif.

As to quaternary structure, homodimer.

The protein resides in the cytoplasm. Its function is as follows. Represses the transcription of fabB, involved in unsaturated fatty acid (UFA) biosynthesis. By controlling UFA production, FabR directly influences the physical properties of the membrane bilayer. The sequence is that of HTH-type transcriptional repressor FabR from Escherichia coli O1:K1 / APEC.